A 349-amino-acid polypeptide reads, in one-letter code: Isopentenyl-diphosphate delta-isomerase (349 aa).

A substrate-binding site is contributed by 6 to 7; sequence RK. FMN-binding positions include 62–64, S93, and N122; that span reads AMT. Q152 contacts substrate. E153 is a Mg(2+) binding site. FMN is bound by residues K184, T214, 258–259, and 280–281; these read GG and AG.

The protein belongs to the IPP isomerase type 2 family. Homooctamer. Dimer of tetramers. Requires FMN as cofactor. NADPH is required as a cofactor. It depends on Mg(2+) as a cofactor.

The protein resides in the cytoplasm. The enzyme catalyses isopentenyl diphosphate = dimethylallyl diphosphate. In terms of biological role, involved in the biosynthesis of isoprenoids. Catalyzes the 1,3-allylic rearrangement of the homoallylic substrate isopentenyl (IPP) to its allylic isomer, dimethylallyl diphosphate (DMAPP). The sequence is that of Isopentenyl-diphosphate delta-isomerase from Bacillus anthracis (strain A0248).